Here is an 826-residue protein sequence, read N- to C-terminus: (2S)-3-sulfopropanediol dehydratase (826 aa).

The PFL domain occupies 33-695 (PRVNRLRQAF…NTNASIDGRK (663 aa)). Residue Cys-464 is the Cysteine radical intermediate of the active site. Glu-466 (proton acceptor) is an active-site residue. Positions 706-826 (PVHTDGGSHD…DLIQRTELHF (121 aa)) constitute a Glycine radical domain. Position 802 is a glycine radical (Gly-802).

This sequence belongs to the glycyl radical enzyme (GRE) family. In terms of processing, requires the activating protein HpfH to generate the key active site glycyl radical on Gly-802 that is involved in catalysis.

The catalysed reaction is (2S)-3-sulfopropanediol = 3-oxopropane-1-sulfonate + H2O. It participates in organosulfur degradation; alkanesulfonate degradation. Its function is as follows. Involved in the degradation of the organosulfur compound 2(S)-dihydroxypropanesulfonate (DHPS). Catalyzes the radical-mediated dehydration of DHPS to produce 3-sulfopropionaldehyde (3-oxopropane-1-sulfonate). This is (2S)-3-sulfopropanediol dehydratase from Klebsiella oxytoca.